The primary structure comprises 416 residues: Serine hydroxymethyltransferase (416 aa).

(6S)-5,6,7,8-tetrahydrofolate-binding positions include Leu118 and 122 to 124 (GHL). Lys226 bears the N6-(pyridoxal phosphate)lysine mark. Residues Glu242 and 350–352 (SPF) each bind (6S)-5,6,7,8-tetrahydrofolate.

Belongs to the SHMT family. As to quaternary structure, homodimer. Pyridoxal 5'-phosphate is required as a cofactor.

The protein resides in the cytoplasm. The catalysed reaction is (6R)-5,10-methylene-5,6,7,8-tetrahydrofolate + glycine + H2O = (6S)-5,6,7,8-tetrahydrofolate + L-serine. The protein operates within one-carbon metabolism; tetrahydrofolate interconversion. It functions in the pathway amino-acid biosynthesis; glycine biosynthesis; glycine from L-serine: step 1/1. Its function is as follows. Catalyzes the reversible interconversion of serine and glycine with tetrahydrofolate (THF) serving as the one-carbon carrier. This reaction serves as the major source of one-carbon groups required for the biosynthesis of purines, thymidylate, methionine, and other important biomolecules. Also exhibits THF-independent aldolase activity toward beta-hydroxyamino acids, producing glycine and aldehydes, via a retro-aldol mechanism. In Helicobacter pylori (strain G27), this protein is Serine hydroxymethyltransferase.